The sequence spans 165 residues: Protein AIG2 C (165 aa).

A substrate-binding site is contributed by 14-19 (YGSILE). Residue Glu-82 is the Proton acceptor of the active site.

Belongs to the gamma-glutamylcyclotransferase family. As to expression, expressed in floral organs, leaves, stems and roots.

In terms of biological role, putative gamma-glutamylcyclotransferase. The chain is Protein AIG2 C from Arabidopsis thaliana (Mouse-ear cress).